The primary structure comprises 59 residues: Antitoxin Rv0909 (59 aa).

Its function is as follows. Antitoxin component of a type II toxin-antitoxin (TA) system. Upon expression in M.smegmatis neutralizes the effect of cognate toxin Rv0910. This Mycobacterium tuberculosis (strain ATCC 25618 / H37Rv) protein is Antitoxin Rv0909.